A 115-amino-acid chain; its full sequence is Large ribosomal subunit protein bL20c (115 aa).

The protein belongs to the bacterial ribosomal protein bL20 family.

The protein localises to the plastid. The protein resides in the chloroplast. Functionally, binds directly to 23S ribosomal RNA and is necessary for the in vitro assembly process of the 50S ribosomal subunit. It is not involved in the protein synthesizing functions of that subunit. This is Large ribosomal subunit protein bL20c (rpl20) from Mesostigma viride (Green alga).